The primary structure comprises 843 residues: Protein P (843 aa).

Positions 1-177 (MPLSYQHFRK…FCGSPYSWEQ (177 aa)) are terminal protein domain (TP). The segment at 178–346 (ELQHGRLFFK…YCLSHIVNLL (169 aa)) is spacer. The interval 248 to 272 (HPTTRQSFGVEPSGSGHIDNSASNS) is disordered. The polymerase/reverse transcriptase domain (RT) stretch occupies residues 347–690 (EDWGPCTENG…YLNLYPVARQ (344 aa)). Residues 357-600 (EHNIRIPRTP…YSLNFMGYVI (244 aa)) form the Reverse transcriptase domain. Residues Asp429, Asp551, and Asp552 each contribute to the Mg(2+) site.

The protein belongs to the hepadnaviridae P protein family.

It carries out the reaction DNA(n) + a 2'-deoxyribonucleoside 5'-triphosphate = DNA(n+1) + diphosphate. The catalysed reaction is Endonucleolytic cleavage to 5'-phosphomonoester.. Activated by host HSP70 and HSP40 in vitro to be able to bind the epsilon loop of the pgRNA. Because deletion of the RNase H region renders the protein partly chaperone-independent, the chaperones may be needed indirectly to relieve occlusion of the RNA-binding site by this domain. Inhibited by several reverse-transcriptase inhibitors: Lamivudine, Adefovir and Entecavir. In terms of biological role, multifunctional enzyme that converts the viral RNA genome into dsDNA in viral cytoplasmic capsids. This enzyme displays a DNA polymerase activity that can copy either DNA or RNA templates, and a ribonuclease H (RNase H) activity that cleaves the RNA strand of RNA-DNA heteroduplexes in a partially processive 3'- to 5'-endonucleasic mode. Neo-synthesized pregenomic RNA (pgRNA) are encapsidated together with the P protein, and reverse-transcribed inside the nucleocapsid. Initiation of reverse-transcription occurs first by binding the epsilon loop on the pgRNA genome, and is initiated by protein priming, thereby the 5'-end of (-)DNA is covalently linked to P protein. Partial (+)DNA is synthesized from the (-)DNA template and generates the relaxed circular DNA (RC-DNA) genome. After budding and infection, the RC-DNA migrates in the nucleus, and is converted into a plasmid-like covalently closed circular DNA (cccDNA). The activity of P protein does not seem to be necessary for cccDNA generation, and is presumably released from (+)DNA by host nuclear DNA repair machinery. This chain is Protein P, found in Homo sapiens (Human).